Consider the following 1088-residue polypeptide: MIQQYNPFKKDAFDILLPDLVGIQLESFSTFLKKGLIEQLRDFSVITDPTNNLELRLLVEQYKLKRPRYNEKKCIRRACTYASQLYIPAQLINKKTGKVQEQDVFLGEMPIMTSRGNFIINGSARVIVNQIVRSPGIYYKREIDPKEGIKTYSASIICNRGAWLRLETDKNGFVWARIGKVRKVSGFILLRAMGLTKSKILNSLRHPEFFQKTIEEGDPYSENDALIDLHSQLYPERPSTLFAARELLKSKFFDPKYYDLGKVGRYKINKKLQLSIPEDIRVLTPQDILTAIDYLINLEFNIGTLDDIDHLKNRRVRSVGELIENQVRVGLSRLERMTYKRMAESHPDALTPASLINPKPLVGVLREFFGSSQLSQFMDQTNPLSEMTHKRRISCLGPGGLSKERAGLAVRDIHPSHYGRICPIETPEGPNAGLIGSLATHARVNPYGFLESPFYPTKNRKVFKKTLPIYLSPDQEDELRVSPGDLLLSSSGKLEGKTVPIRYKQDFSTSRSDQVDYVGISPIQAISIATSLIPFLEHDDANRALMGSNMQRQAVPVIRPERPVVGTGLEAQAALDSGTVIVARHDGIVSLVDSNKIILRSSCGSNQTKVDSVGLNFDYQIDRYHLQKYNRSNQDTCINQRPVVHQGEFIKKGDILADGAATVGGQLTLGKNVLVAYMPWEGYNFEDAILISQRLVYDDIYTSIHIEKYEIEARKTKLGPEKITREVPNLGDYVLRNLDENGIVIPGAWVEAGDILVGKVTPKEDLDQHPEGKLLRAIFSEKARDVRDTSLRVPNGVRGRVVDVRRLKGSELPSGVNMVVHIFISQKRKIQVGDKMAGRHGNKGIISRILPRQDMPYLQDGTPVDMVLNPLGVPSRMNVGQVYECLLGLAGHFLGEEYKLIPFDEMYGKEASRGFVYSKLYEARKKTGYPWLFDIANPGKSQLFDGRTGEPFDQPVTVGRAYMLKLVHLVDDKIHARSTGPYSLVTQQPLGGKAKHGGQRLGEMEVWALEGFGAAYTLQELLTVKSDDMKGRNEAQHAIIKGRPIPKPGTPESFKVLIRELQSLCLDIGIYKIDKTKKGQEIDLMMSM.

Belongs to the RNA polymerase beta chain family. In terms of assembly, in plastids the minimal PEP RNA polymerase catalytic core is composed of four subunits: alpha, beta, beta', and beta''. When a (nuclear-encoded) sigma factor is associated with the core the holoenzyme is formed, which can initiate transcription.

The protein resides in the plastid. It is found in the chloroplast. The catalysed reaction is RNA(n) + a ribonucleoside 5'-triphosphate = RNA(n+1) + diphosphate. DNA-dependent RNA polymerase catalyzes the transcription of DNA into RNA using the four ribonucleoside triphosphates as substrates. The protein is DNA-directed RNA polymerase subunit beta of Chlorokybus atmophyticus (Soil alga).